A 166-amino-acid polypeptide reads, in one-letter code: NAD(P)H-quinone oxidoreductase subunit I, chloroplastic (166 aa).

4Fe-4S ferredoxin-type domains follow at residues 55–84 (GRIH…VDWK) and 95–124 (LNYS…MTEE). C64, C67, C70, C74, C104, C107, C110, and C114 together coordinate [4Fe-4S] cluster.

This sequence belongs to the complex I 23 kDa subunit family. As to quaternary structure, NDH is composed of at least 16 different subunits, 5 of which are encoded in the nucleus. It depends on [4Fe-4S] cluster as a cofactor.

It localises to the plastid. Its subcellular location is the chloroplast thylakoid membrane. It carries out the reaction a plastoquinone + NADH + (n+1) H(+)(in) = a plastoquinol + NAD(+) + n H(+)(out). It catalyses the reaction a plastoquinone + NADPH + (n+1) H(+)(in) = a plastoquinol + NADP(+) + n H(+)(out). Its function is as follows. NDH shuttles electrons from NAD(P)H:plastoquinone, via FMN and iron-sulfur (Fe-S) centers, to quinones in the photosynthetic chain and possibly in a chloroplast respiratory chain. The immediate electron acceptor for the enzyme in this species is believed to be plastoquinone. Couples the redox reaction to proton translocation, and thus conserves the redox energy in a proton gradient. This is NAD(P)H-quinone oxidoreductase subunit I, chloroplastic from Silphium perfoliatum (Cup plant).